The primary structure comprises 536 residues: Global nitrogen regulator NrpR (536 aa).

A winged helix-turn-helix region spans residues 7 to 72; that stretch reads VEILSILSEA…EITEKGIEEL (66 aa). NRD regions lie at residues 80 to 314 and 315 to 536; these read RIGS…KGKF and KVTP…YDDI.

It belongs to the NrpR family. As to quaternary structure, homotetramer. Binds to a single operator as a dimer and cooperatively to two operators as a dimer pair.

Under nitrogen limitation, binding of the intracellular nitrogen metabolite 2-oxoglutarate to NrpR decreases the binding affinity of NrpR to DNA, leading to initiation of transcription. Transcriptional repressor of nitrogen fixation and assimilation genes. Binds to two tandem operators in the glnA and nif promoters, thereby blocking transcription of the genes. The sequence is that of Global nitrogen regulator NrpR from Methanococcus maripaludis (strain DSM 14266 / JCM 13030 / NBRC 101832 / S2 / LL).